The primary structure comprises 191 residues: Adenylate kinase (191 aa).

Residue 10-15 participates in ATP binding; that stretch reads GAGKGT. The segment at 30 to 59 is NMP; the sequence is STGDIFRANVTEGTPLGVEAKRYMDAGEYV. Residues threonine 31, arginine 36, 57–59, 85–88, and glutamine 92 contribute to the AMP site; these read EYV and GYPR. The LID stretch occupies residues 126–136; sequence QRAQVEGRADD. Arginine 127 is a binding site for ATP. The AMP site is built by arginine 133 and arginine 144. Glycine 172 provides a ligand contact to ATP.

The protein belongs to the adenylate kinase family. In terms of assembly, monomer.

The protein resides in the cytoplasm. It carries out the reaction AMP + ATP = 2 ADP. Its pathway is purine metabolism; AMP biosynthesis via salvage pathway; AMP from ADP: step 1/1. Catalyzes the reversible transfer of the terminal phosphate group between ATP and AMP. Plays an important role in cellular energy homeostasis and in adenine nucleotide metabolism. The polypeptide is Adenylate kinase (Nocardioides sp. (strain ATCC BAA-499 / JS614)).